The primary structure comprises 362 residues: Ferredoxin--NADP reductase, leaf isozyme 1, chloroplastic (362 aa).

The transit peptide at 1–36 directs the protein to the chloroplast; the sequence is MAAVTAAAVSTSAAAAVTKASPSPAHCFLPCPPRTR. The region spanning 83-205 is the FAD-binding FR-type domain; sequence KEPYVGKCLL…TGPVGKEMLM (123 aa). FAD-binding positions include 141 to 144, 162 to 164, tyrosine 168, 179 to 181, and threonine 220; these read RLYS, CVK, and VCS. Residues serine 144 and lysine 164 each coordinate NADP(+). Cysteine 180 and cysteine 185 form a disulfide bridge. Serine 181 is subject to Phosphoserine. Residues threonine 220, 252–253, 282–283, lysine 292, 321–322, and glutamate 360 each bind NADP(+); these read VP, SR, and GL.

Belongs to the ferredoxin--NADP reductase type 1 family. Heterodimer with LFNR2. Component of high molecular weight thylakoid LFNRs-containing protein complexes containing LIR1, LFNR1, LFNR2, TIC62 and TROL proteins. Interacts directly with LFNR1 and LFNR2; LIR1 increases the affinity of LFNR1 and LFNR2 for TIC62 and subsequent thylakoid relocalization. It depends on FAD as a cofactor. Post-translationally, may form interchain disulfide bonds with LIR1.

Its subcellular location is the plastid. It is found in the chloroplast stroma. It localises to the chloroplast thylakoid membrane. It catalyses the reaction 2 reduced [2Fe-2S]-[ferredoxin] + NADP(+) + H(+) = 2 oxidized [2Fe-2S]-[ferredoxin] + NADPH. It participates in energy metabolism; photosynthesis. Its function is as follows. Plays a key role in regulating the relative amounts of cyclic and non-cyclic electron flow to meet the demands of the plant for ATP and reducing power. This chain is Ferredoxin--NADP reductase, leaf isozyme 1, chloroplastic, found in Oryza sativa subsp. indica (Rice).